A 128-amino-acid polypeptide reads, in one-letter code: Large ribosomal subunit protein bL12 (128 aa).

The protein belongs to the bacterial ribosomal protein bL12 family. Homodimer. Part of the ribosomal stalk of the 50S ribosomal subunit. Forms a multimeric L10(L12)X complex, where L10 forms an elongated spine to which 2 to 4 L12 dimers bind in a sequential fashion. Binds GTP-bound translation factors.

Its function is as follows. Forms part of the ribosomal stalk which helps the ribosome interact with GTP-bound translation factors. Is thus essential for accurate translation. The chain is Large ribosomal subunit protein bL12 from Streptomyces antibioticus.